Here is a 512-residue protein sequence, read N- to C-terminus: Glycerol-3-phosphate dehydrogenase (512 aa).

FAD is bound at residue 16–44; that stretch reads DVAVVGGGINGVGIAADAAGRGLSVFLCE.

The protein belongs to the FAD-dependent glycerol-3-phosphate dehydrogenase family. It depends on FAD as a cofactor.

The protein localises to the cytoplasm. The catalysed reaction is a quinone + sn-glycerol 3-phosphate = dihydroxyacetone phosphate + a quinol. In Pseudomonas aeruginosa (strain ATCC 15692 / DSM 22644 / CIP 104116 / JCM 14847 / LMG 12228 / 1C / PRS 101 / PAO1), this protein is Glycerol-3-phosphate dehydrogenase (glpD).